Reading from the N-terminus, the 617-residue chain is Vacuolar protein sorting-associated protein 33B (617 aa).

Belongs to the STXBP/unc-18/SEC1 family. Probable core component of the class C core vacuole/endosome tethering (CORVET) complex. The common core is composed of the class C Vps proteins vps-11, vps-16 and vps-18, and which further associates with vps-8 and vps-33.2. Interacts with spe-39. As to expression, broadly expressed in somatic tissues including the pharynx, intestine, spermatheca, and in coelomocytes. Expressed in the lining of the gut lumen.

It is found in the early endosome. It localises to the late endosome membrane. Its subcellular location is the lysosome membrane. The protein localises to the cytoplasmic vesicle. The protein resides in the clathrin-coated vesicle. It is found in the recycling endosome. Functionally, plays a role in vesicle-mediated protein trafficking to lysosomal compartments and in membrane docking/fusion reactions of late endosomes/lysosomes. Believed to act as a component of the putative CORVET endosomal tethering complex which is proposed to be involved in the rab-5-to-rab-7 endosome conversion probably implicating sand-1, and via binding SNAREs and SNARE complexes to mediate tethering and docking events during SNARE-mediated membrane fusion. The CORVET complex is proposed to function as a rab-5 effector to mediate early endosome fusion probably in specific endosome subpopulations. Most likely within the CORVET complex, it is involved in the fusion of endocytic compartments. Required for sperm development and function. In Caenorhabditis elegans, this protein is Vacuolar protein sorting-associated protein 33B.